The sequence spans 224 residues: Small ribosomal subunit protein uS3 (224 aa).

Positions 38 to 106 constitute a KH type-2 domain; that stretch reads IRKFISEKLK…QVHINIVEIK (69 aa).

Belongs to the universal ribosomal protein uS3 family. Part of the 30S ribosomal subunit. Forms a tight complex with proteins S10 and S14.

Binds the lower part of the 30S subunit head. Binds mRNA in the 70S ribosome, positioning it for translation. This is Small ribosomal subunit protein uS3 from Lactobacillus acidophilus (strain ATCC 700396 / NCK56 / N2 / NCFM).